A 536-amino-acid polypeptide reads, in one-letter code: DEAD-box ATP-dependent RNA helicase 26 (536 aa).

The disordered stretch occupies residues M1–E44. The segment covering H11–P20 has biased composition (basic residues). The Q motif motif lies at T74 to E102. In terms of domain architecture, Helicase ATP-binding spans L105–F282. A118–T125 serves as a coordination point for ATP. The DEAD box signature appears at D230 to D233. A Helicase C-terminal domain is found at V316–L466.

This sequence belongs to the DEAD box helicase family.

The enzyme catalyses ATP + H2O = ADP + phosphate + H(+). This chain is DEAD-box ATP-dependent RNA helicase 26, found in Oryza sativa subsp. japonica (Rice).